Here is a 124-residue protein sequence, read N- to C-terminus: Probable glycine cleavage system H protein (124 aa).

The 82-residue stretch at 23-104 (VATVGITDYA…PYKNWLVKIR (82 aa)) folds into the Lipoyl-binding domain. K64 carries the N6-lipoyllysine modification.

Belongs to the GcvH family. The glycine cleavage system is composed of four proteins: P, T, L and H. (R)-lipoate serves as cofactor.

The glycine cleavage system catalyzes the degradation of glycine. The H protein shuttles the methylamine group of glycine from the P protein to the T protein. The chain is Probable glycine cleavage system H protein from Picrophilus torridus (strain ATCC 700027 / DSM 9790 / JCM 10055 / NBRC 100828 / KAW 2/3).